We begin with the raw amino-acid sequence, 473 residues long: Ribulose bisphosphate carboxylase large chain 3 (473 aa).

Substrate is bound by residues Asn116 and Thr166. Lys168 (proton acceptor) is an active-site residue. Residue Lys170 coordinates substrate. Residues Lys194, Asp196, and Glu197 each coordinate Mg(2+). N6-carboxylysine is present on Lys194. The active-site Proton acceptor is the His287. Positions 288, 320, and 372 each coordinate substrate.

This sequence belongs to the RuBisCO large chain family. Type I subfamily. Heterohexadecamer of 8 large chains and 8 small chains. Mg(2+) serves as cofactor.

It catalyses the reaction 2 (2R)-3-phosphoglycerate + 2 H(+) = D-ribulose 1,5-bisphosphate + CO2 + H2O. The enzyme catalyses D-ribulose 1,5-bisphosphate + O2 = 2-phosphoglycolate + (2R)-3-phosphoglycerate + 2 H(+). RuBisCO catalyzes two reactions: the carboxylation of D-ribulose 1,5-bisphosphate, the primary event in carbon dioxide fixation, as well as the oxidative fragmentation of the pentose substrate. Both reactions occur simultaneously and in competition at the same active site. In Nitrobacter hamburgensis (strain DSM 10229 / NCIMB 13809 / X14), this protein is Ribulose bisphosphate carboxylase large chain 3.